Reading from the N-terminus, the 87-residue chain is Chromosomal protein MC1b (87 aa).

Its function is as follows. Protects DNA against thermal denaturation and modulates transcription. The protein is Chromosomal protein MC1b of Methanothrix soehngenii (Methanosaeta concilii).